The chain runs to 335 residues: Glyceraldehyde-3-phosphate dehydrogenase (335 aa).

NAD(+)-binding positions include 11 to 12 (RI), D33, and K78. D-glyceraldehyde 3-phosphate is bound by residues 148–150 (SST), T179, 208–209 (TG), and R231. N313 lines the NAD(+) pocket.

It belongs to the glyceraldehyde-3-phosphate dehydrogenase family. Homotetramer.

It localises to the cytoplasm. It catalyses the reaction D-glyceraldehyde 3-phosphate + phosphate + NAD(+) = (2R)-3-phospho-glyceroyl phosphate + NADH + H(+). It functions in the pathway carbohydrate degradation; glycolysis; pyruvate from D-glyceraldehyde 3-phosphate: step 1/5. This chain is Glyceraldehyde-3-phosphate dehydrogenase (GPD), found in Pleurotus sajor-caju (Oyster mushroom).